A 351-amino-acid polypeptide reads, in one-letter code: Protein arginine N-methyltransferase 1 (351 aa).

In terms of domain architecture, SAM-dependent MTase PRMT-type spans 30–331; the sequence is KDYYFDSYAH…KNNRDLDFTV (302 aa). Residues His-43, Arg-52, Gly-76, Glu-98, and Glu-127 each contribute to the S-adenosyl-L-methionine site. Catalysis depends on residues Glu-142 and Glu-151.

Belongs to the class I-like SAM-binding methyltransferase superfamily. Protein arginine N-methyltransferase family. Homodimer. Homooctamer; individual homodimers associates to form a homooctamer and homooligomerization is required for proper localization to the cell membrane. Individual homodimers can associate to form a homohexamer. Component of a complex with lsm14a/rap55a. Interacts with cirbp.

The protein resides in the nucleus. The protein localises to the nucleoplasm. It localises to the cytoplasm. Its subcellular location is the cytosol. It carries out the reaction L-arginyl-[protein] + 2 S-adenosyl-L-methionine = N(omega),N(omega)-dimethyl-L-arginyl-[protein] + 2 S-adenosyl-L-homocysteine + 2 H(+). The enzyme catalyses L-arginyl-[protein] + S-adenosyl-L-methionine = N(omega)-methyl-L-arginyl-[protein] + S-adenosyl-L-homocysteine + H(+). It catalyses the reaction N(omega)-methyl-L-arginyl-[protein] + S-adenosyl-L-methionine = N(omega),N(omega)-dimethyl-L-arginyl-[protein] + S-adenosyl-L-homocysteine + H(+). Functionally, arginine methyltransferase that methylates (mono and asymmetric dimethylation) the guanidino nitrogens of arginyl residues present in target proteins. Constitutes the main enzyme that mediates monomethylation and asymmetric dimethylation of histone H4 'Arg-3' (H4R3me1 and H4R3me2a, respectively), a specific tag for epigenetic transcriptional activation. Methylates ilf3 to regulate its DNA-binding activity. Required for neural induction, playing a key role in the control of epidermal versus neural cell fate choice. Methylates cirbp to regulate its subcellular location. Acts transiently during metamorphosis as a transcription coactivator, enhancing thyroid hormone (T3) receptor (TR)-mediated transcription by enhancing TR binding to the T3 response element (TRE), and histone modification through recruitment of other coactivators. In Xenopus tropicalis (Western clawed frog), this protein is Protein arginine N-methyltransferase 1.